The chain runs to 811 residues: DNA mismatch repair protein MutS (811 aa).

Residue 595-602 (GPNMSGKS) coordinates ATP.

This sequence belongs to the DNA mismatch repair MutS family.

Functionally, this protein is involved in the repair of mismatches in DNA. It is possible that it carries out the mismatch recognition step. This protein has a weak ATPase activity. The sequence is that of DNA mismatch repair protein MutS from Pseudothermotoga lettingae (strain ATCC BAA-301 / DSM 14385 / NBRC 107922 / TMO) (Thermotoga lettingae).